The primary structure comprises 259 residues: Phosphate import ATP-binding protein PstB (259 aa).

The region spanning 13–254 (IQVRDLNFYY…PAQRQTEDYI (242 aa)) is the ABC transporter domain. Residue 45–52 (GPSGCGKS) coordinates ATP.

Belongs to the ABC transporter superfamily. Phosphate importer (TC 3.A.1.7) family. The complex is composed of two ATP-binding proteins (PstB), two transmembrane proteins (PstC and PstA) and a solute-binding protein (PstS).

The protein localises to the cell inner membrane. The catalysed reaction is phosphate(out) + ATP + H2O = ADP + 2 phosphate(in) + H(+). Part of the ABC transporter complex PstSACB involved in phosphate import. Responsible for energy coupling to the transport system. The protein is Phosphate import ATP-binding protein PstB of Edwardsiella tarda.